The following is an 87-amino-acid chain: MSLLSFLIGEKKSTASVAKERLQIILAHERSGRNASRPDYLPALQRELLAVISKYVSIEPGDIKVHLERQDNLEVLEVKIELPDVQR.

It belongs to the MinE family.

Its function is as follows. Prevents the cell division inhibition by proteins MinC and MinD at internal division sites while permitting inhibition at polar sites. This ensures cell division at the proper site by restricting the formation of a division septum at the midpoint of the long axis of the cell. The protein is Cell division topological specificity factor of Leptothrix cholodnii (strain ATCC 51168 / LMG 8142 / SP-6) (Leptothrix discophora (strain SP-6)).